A 314-amino-acid polypeptide reads, in one-letter code: Melanoma-associated antigen 2 (314 aa).

A compositionally biased stretch (basic and acidic residues) spans 1–20 (MPLEQRSQHCKPEEGLEARG). The segment at 1-69 (MPLEQRSQHC…SPPHSPQGAS (69 aa)) is disordered. Residues 21–44 (EALGLVGAQAPATEEQQTASSSST) show a composition bias toward low complexity. Ser64 carries the post-translational modification Phosphoserine. Residues 109–308 (ISRKMVELVH…ISYPPLHERA (200 aa)) form the MAGE domain.

Interacts with TRIM28 and UBE2H. Interacts with HDAC3. Interacts with PML (isoform PML-1, isoform PML-2, isoform PML-3, isoform PML-4 and isoform PML-5). As to expression, expressed in many tumors of several types, such as melanoma, head and neck squamous cell carcinoma, lung carcinoma and breast carcinoma, but not in normal tissues except for testes.

It is found in the nucleus. The protein localises to the PML body. Functionally, reduces p53/TP53 transactivation function through recruitment of HDAC3 to p53/TP53 transcription sites. Also represses p73/TP73 activity. Proposed to enhance ubiquitin ligase activity of RING-type zinc finger-containing E3 ubiquitin-protein ligases. In vitro enhances ubiquitin ligase activity of TRIM28 and stimulates p53/TP53 ubiquitination by TRIM28 potentially in presence of Ubl-conjugating enzyme UBE2H. Proposed to act through recruitment and/or stabilization of the Ubl-conjugating enzyme (E2) at the E3:substrate complex. May play a role in embryonal development and tumor transformation or aspects of tumor progression. In vitro promotes cell viability in melanoma cell lines. Antigen recognized on a melanoma by autologous cytolytic T-lymphocytes. Negatively regulates acetylation and sumoylation of PML and represses PML-induced p53/TP53 acetylation and activation. The sequence is that of Melanoma-associated antigen 2 (MAGEA2) from Homo sapiens (Human).